Consider the following 803-residue polypeptide: Elongation factor G, mitochondrial (803 aa).

The transit peptide at 1–24 (MVRPAQVRAFSGLARSATSTRLIP) directs the protein to the mitochondrion. In terms of domain architecture, tr-type G spans 102–388 (SKVRNIGIAA…GVCDYLPNPS (287 aa)). GTP is bound by residues 111–118 (AHIDSGKT), 186–190 (DTPGH), and 240–243 (NKMD).

It belongs to the TRAFAC class translation factor GTPase superfamily. Classic translation factor GTPase family. EF-G/EF-2 subfamily.

Its subcellular location is the mitochondrion. It participates in protein biosynthesis; polypeptide chain elongation. In terms of biological role, mitochondrial GTPase that catalyzes the GTP-dependent ribosomal translocation step during translation elongation. During this step, the ribosome changes from the pre-translocational (PRE) to the post-translocational (POST) state as the newly formed A-site-bound peptidyl-tRNA and P-site-bound deacylated tRNA move to the P and E sites, respectively. Catalyzes the coordinated movement of the two tRNA molecules, the mRNA and conformational changes in the ribosome. The polypeptide is Elongation factor G, mitochondrial (mef1) (Talaromyces marneffei (strain ATCC 18224 / CBS 334.59 / QM 7333) (Penicillium marneffei)).